A 60-amino-acid polypeptide reads, in one-letter code: Large ribosomal subunit protein bL33 (60 aa).

This sequence belongs to the bacterial ribosomal protein bL33 family.

This chain is Large ribosomal subunit protein bL33, found in Christiangramia forsetii (strain DSM 17595 / CGMCC 1.15422 / KT0803) (Gramella forsetii).